Consider the following 362-residue polypeptide: Chorismate synthase (362 aa).

An NADP(+)-binding site is contributed by R47. FMN is bound by residues 124–126 (RSS), G286, 301–305 (KPTAT), and R327.

Belongs to the chorismate synthase family. Homotetramer. It depends on FMNH2 as a cofactor.

The catalysed reaction is 5-O-(1-carboxyvinyl)-3-phosphoshikimate = chorismate + phosphate. The protein operates within metabolic intermediate biosynthesis; chorismate biosynthesis; chorismate from D-erythrose 4-phosphate and phosphoenolpyruvate: step 7/7. Its function is as follows. Catalyzes the anti-1,4-elimination of the C-3 phosphate and the C-6 proR hydrogen from 5-enolpyruvylshikimate-3-phosphate (EPSP) to yield chorismate, which is the branch point compound that serves as the starting substrate for the three terminal pathways of aromatic amino acid biosynthesis. This reaction introduces a second double bond into the aromatic ring system. This is Chorismate synthase from Synechococcus elongatus (strain ATCC 33912 / PCC 7942 / FACHB-805) (Anacystis nidulans R2).